The sequence spans 73 residues: Putative antitoxin VapB38 (73 aa).

Its function is as follows. Probable antitoxin component of a type II toxin-antitoxin (TA) system. Its putative cognate toxin is VapC38. In Mycobacterium tuberculosis (strain ATCC 25618 / H37Rv), this protein is Putative antitoxin VapB38 (vapB38).